A 423-amino-acid chain; its full sequence is L-cysteine:1D-myo-inositol 2-amino-2-deoxy-alpha-D-glucopyranoside ligase (423 aa).

Cys43 contacts Zn(2+). L-cysteinyl-5'-AMP contacts are provided by residues 43–46 (CGIT), Thr58, and 81–83 (NVT). Residues 45–55 (ITPYDATHMGH) carry the 'HIGH' region motif. The 'ERGGDP' region motif lies at 199 to 204 (ERGGDP). Residue Trp240 coordinates L-cysteinyl-5'-AMP. Cys244 contributes to the Zn(2+) binding site. Position 262–264 (262–264 (GSD)) interacts with L-cysteinyl-5'-AMP. His269 lines the Zn(2+) pocket. Val295 serves as a coordination point for L-cysteinyl-5'-AMP. A 'KMSKS' region motif is present at residues 301 to 305 (KMSKS).

The protein belongs to the class-I aminoacyl-tRNA synthetase family. MshC subfamily. In terms of assembly, monomer. Zn(2+) serves as cofactor.

The catalysed reaction is 1D-myo-inositol 2-amino-2-deoxy-alpha-D-glucopyranoside + L-cysteine + ATP = 1D-myo-inositol 2-(L-cysteinylamino)-2-deoxy-alpha-D-glucopyranoside + AMP + diphosphate + H(+). Functionally, catalyzes the ATP-dependent condensation of GlcN-Ins and L-cysteine to form L-Cys-GlcN-Ins. The protein is L-cysteine:1D-myo-inositol 2-amino-2-deoxy-alpha-D-glucopyranoside ligase of Renibacterium salmoninarum (strain ATCC 33209 / DSM 20767 / JCM 11484 / NBRC 15589 / NCIMB 2235).